A 172-amino-acid chain; its full sequence is Translation initiation factor IF-3 (172 aa).

This sequence belongs to the IF-3 family. Monomer.

The protein resides in the cytoplasm. In terms of biological role, IF-3 binds to the 30S ribosomal subunit and shifts the equilibrium between 70S ribosomes and their 50S and 30S subunits in favor of the free subunits, thus enhancing the availability of 30S subunits on which protein synthesis initiation begins. In Campylobacter fetus subsp. fetus (strain 82-40), this protein is Translation initiation factor IF-3.